The sequence spans 99 residues: Small ribosomal subunit protein bS6c (99 aa).

It belongs to the bacterial ribosomal protein bS6 family.

It is found in the plastid. The protein resides in the chloroplast. Functionally, binds together with bS18 to 16S ribosomal RNA. The polypeptide is Small ribosomal subunit protein bS6c (Cyanidioschyzon merolae (strain NIES-3377 / 10D) (Unicellular red alga)).